Here is a 402-residue protein sequence, read N- to C-terminus: 1-deoxy-D-xylulose 5-phosphate reductoisomerase (402 aa).

T13, G14, S15, I16, and N126 together coordinate NADPH. 1-deoxy-D-xylulose 5-phosphate is bound at residue K127. E128 contributes to the NADPH binding site. D152 provides a ligand contact to Mn(2+). S153, E154, S188, and H211 together coordinate 1-deoxy-D-xylulose 5-phosphate. E154 is a binding site for Mn(2+). G217 serves as a coordination point for NADPH. Residues S224, N229, K230, and E233 each contribute to the 1-deoxy-D-xylulose 5-phosphate site. Residue E233 coordinates Mn(2+).

It belongs to the DXR family. Requires Mg(2+) as cofactor. Mn(2+) serves as cofactor.

It carries out the reaction 2-C-methyl-D-erythritol 4-phosphate + NADP(+) = 1-deoxy-D-xylulose 5-phosphate + NADPH + H(+). It functions in the pathway isoprenoid biosynthesis; isopentenyl diphosphate biosynthesis via DXP pathway; isopentenyl diphosphate from 1-deoxy-D-xylulose 5-phosphate: step 1/6. In terms of biological role, catalyzes the NADPH-dependent rearrangement and reduction of 1-deoxy-D-xylulose-5-phosphate (DXP) to 2-C-methyl-D-erythritol 4-phosphate (MEP). In Psychrobacter arcticus (strain DSM 17307 / VKM B-2377 / 273-4), this protein is 1-deoxy-D-xylulose 5-phosphate reductoisomerase.